Reading from the N-terminus, the 101-residue chain is Therostasin (101 aa).

An N-terminal signal peptide occupies residues 1–19 (MRGLAVLLLVACFCSVAFG). Antistasin-like domains lie at 21 to 46 (CENT…TCLC) and 49 to 75 (CNDA…FCTC).

As to expression, salivary glands.

It localises to the secreted. Functionally, potent inhibitor of factor Xa. It also inhibits trypsin in a weaker manner. This chain is Therostasin, found in Theromyzon tessulatum (Duck leech).